The chain runs to 648 residues: Forkhead box protein N1 (648 aa).

Residues 1 to 95 (MVSLLPPQSD…PGPGSFRLSP (95 aa)) are disordered. Residues 38–50 (APQNKHANFSCSS) are compositionally biased toward polar residues. Residues 54 to 67 (DGPPERTPSLPPHS) show a composition bias toward pro residues. A DNA-binding region (fork-head) is located at residues 271–367 (KPIYSYSILI…EELQKWKRKD (97 aa)). 3 disordered regions span residues 392-432 (LGSP…APGP), 457-521 (HLSP…TLLP), and 629-648 (SAAAGPAVYLSPGSKPLALA). A compositionally biased stretch (pro residues) spans 398-412 (GCPPPGLAGPGPIRP).

As to expression, bone marrow (at protein level). Expressed in thymus and skin.

It localises to the nucleus. Transcriptional regulator which regulates the development, differentiation, and function of thymic epithelial cells (TECs) both in the prenatal and postnatal thymus. Acts as a master regulator of the TECs lineage development and is required from the onset of differentiation in progenitor TECs in the developing fetus to the final differentiation steps through which TECs mature to acquire their full functionality. Regulates, either directly or indirectly the expression of a variety of genes that mediate diverse aspects of thymus development and function, including MHC Class II, DLL4, CCL25, CTSL, CD40 and PAX1. Regulates the differentiation of the immature TECs into functional cortical TECs (cTECs) and medullary TECs (mTECs). Essential for maintenance of mTECs population in the postnatal thymus. Involved in the morphogenesis and maintenance of the three-dimensional thymic microstructure which is necessary for a fully functional thymus. Plays an important role in the maintenance of hematopoiesis and particularly T lineage progenitors within the bone marrow niche with age. Essential for the vascularization of the thymus anlage. Promotes the terminal differentiation of epithelial cells in the epidermis and hair follicles, partly by negatively regulating the activity of protein kinase C. The polypeptide is Forkhead box protein N1 (Foxn1) (Mus musculus (Mouse)).